The sequence spans 125 residues: Large ribosomal subunit protein bL12 (125 aa).

It belongs to the bacterial ribosomal protein bL12 family. As to quaternary structure, homodimer. Part of the ribosomal stalk of the 50S ribosomal subunit. Forms a multimeric L10(L12)X complex, where L10 forms an elongated spine to which 2 to 4 L12 dimers bind in a sequential fashion. Binds GTP-bound translation factors.

Its function is as follows. Forms part of the ribosomal stalk which helps the ribosome interact with GTP-bound translation factors. Is thus essential for accurate translation. The sequence is that of Large ribosomal subunit protein bL12 from Helicobacter acinonychis (strain Sheeba).